Reading from the N-terminus, the 103-residue chain is Large ribosomal subunit protein uL24 (103 aa).

The protein belongs to the universal ribosomal protein uL24 family. Part of the 50S ribosomal subunit.

Functionally, one of two assembly initiator proteins, it binds directly to the 5'-end of the 23S rRNA, where it nucleates assembly of the 50S subunit. In terms of biological role, one of the proteins that surrounds the polypeptide exit tunnel on the outside of the subunit. The sequence is that of Large ribosomal subunit protein uL24 from Actinobacillus pleuropneumoniae serotype 3 (strain JL03).